Reading from the N-terminus, the 284-residue chain is Pantothenate synthetase (284 aa).

30 to 37 (MGYLHEGH) contacts ATP. Residue His37 is the Proton donor of the active site. (R)-pantoate is bound at residue Gln61. Residue Gln61 participates in beta-alanine binding. 147 to 150 (GQKD) is an ATP binding site. Gln153 contributes to the (R)-pantoate binding site. ATP is bound by residues Val176 and 184-187 (KSSR).

This sequence belongs to the pantothenate synthetase family. In terms of assembly, homodimer.

The protein resides in the cytoplasm. It catalyses the reaction (R)-pantoate + beta-alanine + ATP = (R)-pantothenate + AMP + diphosphate + H(+). The protein operates within cofactor biosynthesis; (R)-pantothenate biosynthesis; (R)-pantothenate from (R)-pantoate and beta-alanine: step 1/1. Functionally, catalyzes the condensation of pantoate with beta-alanine in an ATP-dependent reaction via a pantoyl-adenylate intermediate. This chain is Pantothenate synthetase, found in Lysinibacillus sphaericus (strain C3-41).